The sequence spans 440 residues: uncharacterized protein (440 aa).

Positions 1–19 (MKKLLLAASIVYFASACLA) are cleaved as a signal peptide.

This is an uncharacterized protein from Rickettsia prowazekii (strain Madrid E).